The following is a 341-amino-acid chain: Fructose-1,6-bisphosphatase, cytosolic (341 aa).

Mg(2+)-binding residues include Glu71, Glu100, Asp121, Leu123, and Asp124. Residues Asp124–Ser127, Asn215, Tyr247, Tyr267, and Lys277 contribute to the substrate site. Glu283 serves as a coordination point for Mg(2+).

The protein belongs to the FBPase class 1 family. Requires Mg(2+) as cofactor.

It localises to the cytoplasm. It carries out the reaction beta-D-fructose 1,6-bisphosphate + H2O = beta-D-fructose 6-phosphate + phosphate. The polypeptide is Fructose-1,6-bisphosphatase, cytosolic (Beta vulgaris (Sugar beet)).